The following is an 859-amino-acid chain: ATP-dependent RNA helicase DDX24 (859 aa).

Lys-17 bears the N6-acetyllysine mark. Ser-60 is modified (phosphoserine). Positions 61–175 are disordered; the sequence is PAKNPSSLFS…SQSTAAKVPK (115 aa). Lys-71 is modified (N6-acetyllysine). Ser-82 and Ser-94 each carry phosphoserine. The span at 82 to 91 shows a compositional bias: acidic residues; it reads SEEEEEEEGE. Residues 95–105 show a composition bias toward basic residues; the sequence is PKKKIKLKKSK. Residues 106–115 are compositionally biased toward polar residues; the sequence is NVATEGTSTQ. Positions 192 to 220 match the Q motif motif; the sequence is SAWKDLFVPRPVLRALSFLGFSAPTPIQV. In terms of domain architecture, Helicase ATP-binding spans 224–528; sequence APAIRDKLDI…RILHKKHTKK (305 aa). Residue 237–244 coordinates ATP; sequence AETGSGKT. Residues 262 to 374 form a disordered region; that stretch reads NAAPPPSNTE…QTGNLKQELD (113 aa). Residues 277-293 are compositionally biased toward basic and acidic residues; it reads TRPEAGAETRSPGKAEA. Phosphoserine is present on residues Ser-287 and Ser-295. The segment covering 294 to 304 has biased composition (acidic residues); it reads ESDALPDDTVI. A Phosphothreonine modification is found at Thr-302. Residue Lys-370 forms a Glycyl lysine isopeptide (Lys-Gly) (interchain with G-Cter in SUMO2) linkage. The DEAD box signature appears at 471–474; the sequence is DEAD. One can recognise a Helicase C-terminal domain in the interval 578-723; the sequence is YLYYFLMQYP…LFPVQTKYMD (146 aa). Glycyl lysine isopeptide (Lys-Gly) (interchain with G-Cter in SUMO2) cross-links involve residues Lys-624, Lys-808, and Lys-825. Composition is skewed to polar residues over residues 799-814 and 823-834; these read PLFTESQKTKYPTQSG and PSKSESALSCLS. Residues 799–859 form a disordered region; sequence PLFTESQKTK…EQPQPSTSAN (61 aa).

Belongs to the DEAD box helicase family. DDX24/MAK5 subfamily. In terms of assembly, interacts with FADD. Interacts with RIPK1; this interaction disrupts RLR signaling activation of IFN-dependent transcription factor IRF7. Interacts with NIP7. Interacts with EP300; this interaction prevents TP53 acetylation mediated by EP300. Post-translationally, ubiquitinated by MDM2 without targeting DDX24 for proteasomal degradation. Instead, polyubiquitylated DDX24 promotes interaction with NIP7, a component of pre-rRNP processing complex, and associates with pre-rRNA molecules and pre-ribosomal particles.

The protein resides in the cytoplasm. It is found in the nucleus. The catalysed reaction is ATP + H2O = ADP + phosphate + H(+). ATP-dependent RNA helicase that plays a role in various aspects of RNA metabolism including pre-mRNA splicing and is thereby involved in different biological processes such as cell cycle regulation or innate immunity. Plays an inhibitory role in TP53 transcriptional activity and subsequently in TP53 controlled cell growth arrest and senescence by inhibiting its EP300 mediated acetylation. Negatively regulates cytosolic RNA-mediated innate immune signaling at least in part by affecting RIPK1/IRF7 interactions. Alternatively, possesses antiviral activity by recognizing gammaherpesvirus transcripts in the context of lytic reactivation. Plays an essential role in cell cycle regulation in vascular smooth muscle cells by interacting with and regulating FANCA (Fanconi anemia complementation group A) mRNA. This chain is ATP-dependent RNA helicase DDX24 (DDX24), found in Pongo abelii (Sumatran orangutan).